Here is a 343-residue protein sequence, read N- to C-terminus: Versiconal hemiacetal acetate reductase (343 aa).

The Proton donor role is filled by Y59. Substrate is bound at residue H144. NADP(+) is bound at residue 229–239; it reads SPVARGALARP.

The protein belongs to the aldo/keto reductase family. Aldo/keto reductase 2 subfamily.

The enzyme catalyses (2S)-versicolorone + NADP(+) = 1'-hydroxyversicolorone + NADPH + H(+). It carries out the reaction (3S)-versiconol acetate + NADP(+) = (2S,3S)-versiconal hemiacetal acetate + NADPH + H(+). The catalysed reaction is (S)-versiconol + NADP(+) = (2S-3S)-versiconal hemiacetal + NADPH + H(+). Catalyzes 3 reactions: from hydroxyversicolorone (HVN) to versicolorone (VONE), from versiconal hemiacetal acetate (VHA) to versiconol acetate (VOAc) and from versiconal (VHOH) to versiconol (VOH). Probably not an aflatoxin biosynthesis gene: may be involved in the vertical branching steps connecting the main pathway from HVN to VHOH with the side pathway from VONE to VOH. The protein is Versiconal hemiacetal acetate reductase (vrdA) of Aspergillus parasiticus.